We begin with the raw amino-acid sequence, 202 residues long: Endothelin-1 (202 aa).

Positions 1–25 are cleaved as a signal peptide; sequence MDYFPVIFSLLFVAFQGAPETAVLG. The propeptide occupies 26–50; it reads AELSPRAEKEVQSPPPSTSWRPRRS. Positions 28–47 are disordered; that stretch reads LSPRAEKEVQSPPPSTSWRP. 2 cysteine pairs are disulfide-bonded: Cys53/Cys67 and Cys55/Cys63. Positions 74–202 are excised as a propeptide; sequence VNTPERVVPY…DQKLIHNRAH (129 aa). The interval 110–124 is endothelin-like; it reads CQCAHQKDKKCWNFC.

Belongs to the endothelin/sarafotoxin family.

The protein localises to the secreted. In terms of biological role, endothelins are endothelium-derived vasoconstrictor peptides. Probable ligand for G-protein coupled receptors EDNRA and EDNRB which activates PTK2B, BCAR1, BCAR3 and, GTPases RAP1 and RHOA cascade in glomerular mesangial cells. Also binds the DEAR/FBXW7-AS1 receptor. Promotes mesenteric arterial wall remodeling via activation of ROCK signaling and subsequent colocalization of NFATC3 with F-actin filaments. NFATC3 then translocates to the nucleus where it subsequently promotes the transcription of the smooth muscle hypertrophy and differentiation marker ACTA2. The polypeptide is Endothelin-1 (Edn1) (Rattus norvegicus (Rat)).